The sequence spans 128 residues: UPF0102 protein PSPTO_4420 (128 aa).

It belongs to the UPF0102 family.

This is UPF0102 protein PSPTO_4420 from Pseudomonas syringae pv. tomato (strain ATCC BAA-871 / DC3000).